The following is a 383-amino-acid chain: 8-amino-7-oxononanoate synthase (383 aa).

R23 is a substrate binding site. Residue G110–F111 coordinates pyridoxal 5'-phosphate. Residue H135 participates in substrate binding. Pyridoxal 5'-phosphate-binding residues include S181, H209, and T235. The residue at position 238 (K238) is an N6-(pyridoxal phosphate)lysine. T351 is a substrate binding site.

The protein belongs to the class-II pyridoxal-phosphate-dependent aminotransferase family. BioF subfamily. As to quaternary structure, homodimer. Pyridoxal 5'-phosphate is required as a cofactor.

It carries out the reaction 6-carboxyhexanoyl-[ACP] + L-alanine + H(+) = (8S)-8-amino-7-oxononanoate + holo-[ACP] + CO2. It participates in cofactor biosynthesis; biotin biosynthesis. Catalyzes the decarboxylative condensation of pimeloyl-[acyl-carrier protein] and L-alanine to produce 8-amino-7-oxononanoate (AON), [acyl-carrier protein], and carbon dioxide. The protein is 8-amino-7-oxononanoate synthase of Aliivibrio fischeri (strain ATCC 700601 / ES114) (Vibrio fischeri).